The chain runs to 333 residues: Glutamyl-tRNA reductase (333 aa).

Substrate is bound by residues 60–63 (TCHR), S110, 115–117 (ETE), and Q121. The active-site Nucleophile is C61. 189–194 (GYSEIN) is an NADP(+) binding site.

It belongs to the glutamyl-tRNA reductase family. In terms of assembly, homodimer.

The enzyme catalyses (S)-4-amino-5-oxopentanoate + tRNA(Glu) + NADP(+) = L-glutamyl-tRNA(Glu) + NADPH + H(+). It participates in porphyrin-containing compound metabolism; protoporphyrin-IX biosynthesis; 5-aminolevulinate from L-glutamyl-tRNA(Glu): step 1/2. In terms of biological role, catalyzes the NADPH-dependent reduction of glutamyl-tRNA(Glu) to glutamate 1-semialdehyde (GSA). The polypeptide is Glutamyl-tRNA reductase (Chlamydia muridarum (strain MoPn / Nigg)).